The chain runs to 290 residues: Cilia- and flagella-associated protein 298 (290 aa).

It belongs to the CFAP298 family. As to quaternary structure, interacts with ZMYND10. In terms of tissue distribution, expressed in the trachea (at protein level).

Its subcellular location is the cytoplasm. It localises to the cytoskeleton. The protein localises to the cilium basal body. Its function is as follows. Plays a role in motile cilium function, possibly by acting on outer dynein arm assembly. Seems to be important for initiation rather than maintenance of cilium motility. Required for correct positioning of cilia at the apical cell surface, suggesting an additional role in the planar cell polarity (PCP) pathway. May suppress canonical Wnt signaling activity. The protein is Cilia- and flagella-associated protein 298 of Rattus norvegicus (Rat).